A 385-amino-acid polypeptide reads, in one-letter code: Protein pelota homolog (385 aa).

A Glycyl lysine isopeptide (Lys-Gly) (interchain with G-Cter in SUMO2) cross-link involves residue Lys162. Phosphoserine is present on residues Ser374, Ser380, Ser381, and Ser382.

Belongs to the eukaryotic release factor 1 family. Pelota subfamily. Component of the Pelota-HBS1L complex, also named Dom34-Hbs1 complex, composed of PELO and HBS1L. Interacts with PINK1. Interacts with ABCE1. Interacts with CNOT4. Requires a divalent metal cation as cofactor.

The protein resides in the cytoplasm. Component of the Pelota-HBS1L complex, a complex that recognizes stalled ribosomes and triggers the No-Go Decay (NGD) pathway. In the Pelota-HBS1L complex, PELO recognizes ribosomes stalled at the 3' end of an mRNA and engages stalled ribosomes by destabilizing mRNA in the mRNA channel. Following mRNA extraction from stalled ribosomes by the SKI complex, the Pelota-HBS1L complex promotes recruitment of ABCE1, which drives the disassembly of stalled ribosomes, followed by degradation of damaged mRNAs as part of the NGD pathway. As part of the PINK1-regulated signaling, upon mitochondrial damage is recruited to the ribosome/mRNA-ribonucleoprotein complex associated to mitochondrial outer membrane thereby enabling the recruitment of autophagy receptors and induction of mitophagy. The chain is Protein pelota homolog (PELO) from Pongo abelii (Sumatran orangutan).